Here is a 459-residue protein sequence, read N- to C-terminus: Vacuolar cation/proton exchanger 3 (459 aa).

Residues 1–67 (MGSIVEPWAA…TLKNILSNLQ (67 aa)) lie on the Cytoplasmic side of the membrane. Residues 68 to 88 (EVILGTKLTLLFLAIPLAILA) traverse the membrane as a helical segment. Over 89–95 (NSYNYGR) the chain is Extracellular. Residues 96–116 (PLIFGLSLIGLTPLAERVSFL) form a helical membrane-spanning segment. Residues 117-129 (TEQLAFYTGPTVG) are Cytoplasmic-facing. Residues 130-150 (GLLNATCGNATELIIAILALA) traverse the membrane as a helical segment. Positions 137–172 (GNATELIIAILALANNKVAVVKYSLLGSILSNLLLV) are cation selection. The Extracellular segment spans residues 151-161 (NNKVAVVKYSL). The helical transmembrane segment at 162–182 (LGSILSNLLLVLGTSLFFGGI) threads the bilayer. At 183–195 (ANIRREQRFDRKQ) the chain is on the cytoplasmic side. Residues 196-216 (ADVNFFLLLMGLLCHLLPLLL) form a helical membrane-spanning segment. Residues 217-238 (KYAATGEVSTSMINKMSLTLSR) are Extracellular-facing. Residues 239–259 (TSSIVMLIAYIAYLIFQLWTH) form a helical membrane-spanning segment. Residues 260 to 283 (RQLFEAQQDDDDAYDDEVSVEETP) are Cytoplasmic-facing. The chain crosses the membrane as a helical span at residues 284 to 304 (VIGFWSGFAWLVGMTIVIALL). Topologically, residues 305–327 (SEYVVDTIEDASDSWGLSVSFIS) are extracellular. Residues 328–348 (IILLPIVGNAAEHAGAIIFAF) traverse the membrane as a helical segment. The interval 335-370 (GNAAEHAGAIIFAFKNKLDISLGVALGSATQISLFV) is cation selection. Residues 349-362 (KNKLDISLGVALGS) lie on the Cytoplasmic side of the membrane. The chain crosses the membrane as a helical span at residues 363–383 (ATQISLFVVPLSVIVAWILGI). At 384 to 386 (KMD) the chain is on the extracellular side. A helical membrane pass occupies residues 387 to 407 (LNFNILETSSLALAIIITAFT). Over 408–417 (LQDGTSHYMK) the chain is Cytoplasmic. The helical transmembrane segment at 418–438 (GLVLLLCYVIIAACFFVDQIP) threads the bilayer. At 439-459 (QPNDLDVGLQPMNNLGEVFSA) the chain is on the extracellular side.

It belongs to the Ca(2+):cation antiporter (CaCA) (TC 2.A.19) family. Cation/proton exchanger (CAX) subfamily. As to expression, expressed in roots, stems and flowers.

Its subcellular location is the vacuole membrane. Inhibited by excess of Ca(2+). In terms of biological role, vacuolar cation/proton exchanger (CAX). Translocates Ca(2+) and other metal ions into vacuoles using the proton gradient formed by H(+)-ATPase and H(+)-pyrophosphatase. Involved in ion homeostasis in association with CAX1. The polypeptide is Vacuolar cation/proton exchanger 3 (CAX3) (Arabidopsis thaliana (Mouse-ear cress)).